Consider the following 629-residue polypeptide: Probable potassium transport system protein Kup 3 (629 aa).

Transmembrane regions (helical) follow at residues 20–40 (LSLS…LYTF), 54–74 (VTTI…IASV), 106–126 (PFII…GTIT), 143–163 (PSLK…LFAI), 171–191 (IGKA…ILGA), 212–232 (FLFS…LCAT), 253–273 (WFGL…ALVL), 291–311 (FLLP…QAII), 343–363 (IYIG…IIGF), 372–392 (AYGI…FIAL), 400–420 (IITS…FFAA), and 425–445 (FING…MMYI).

It belongs to the HAK/KUP transporter (TC 2.A.72) family.

Its subcellular location is the cell inner membrane. The catalysed reaction is K(+)(in) + H(+)(in) = K(+)(out) + H(+)(out). Functionally, transport of potassium into the cell. Likely operates as a K(+):H(+) symporter. This chain is Probable potassium transport system protein Kup 3, found in Legionella pneumophila (strain Paris).